Reading from the N-terminus, the 275-residue chain is NH(3)-dependent NAD(+) synthetase (275 aa).

Residue 46–53 (GISGGQDS) coordinates ATP. A Mg(2+)-binding site is contributed by aspartate 52. A deamido-NAD(+)-binding site is contributed by arginine 140. Threonine 160 provides a ligand contact to ATP. Glutamate 165 lines the Mg(2+) pocket. Lysine 173 and aspartate 180 together coordinate deamido-NAD(+). Lysine 189 and threonine 211 together coordinate ATP. Deamido-NAD(+) is bound at residue 260–261 (HK).

It belongs to the NAD synthetase family. In terms of assembly, homodimer.

It carries out the reaction deamido-NAD(+) + NH4(+) + ATP = AMP + diphosphate + NAD(+) + H(+). It participates in cofactor biosynthesis; NAD(+) biosynthesis; NAD(+) from deamido-NAD(+) (ammonia route): step 1/1. Functionally, catalyzes the ATP-dependent amidation of deamido-NAD to form NAD. Uses ammonia as a nitrogen source. This Escherichia coli O6:K15:H31 (strain 536 / UPEC) protein is NH(3)-dependent NAD(+) synthetase.